A 1479-amino-acid polypeptide reads, in one-letter code: Type VII secretion system protein EssC (1479 aa).

Residues 1 to 189 are required for substrate secretion, protein missing this segment is unstable; that stretch reads MHKLIIKYNK…ASSLIRLTQE (189 aa). Residues 1 to 229 are Cytoplasmic-facing; the sequence is MHKLIIKYNK…RPPQPIQKNN (229 aa). A helical membrane pass occupies residues 230–252; sequence TVIWRSIIPPLVMIALTVVIFLV. At 253-256 the chain is on the extracellular side; it reads RPIG. Residues 257–279 traverse the membrane as a helical segment; it reads IYILMMIGMSTVTIVFGITTYFS. Residues 280-1479 are Cytoplasmic-facing; it reads EKKKYNKDVE…QAYQKIRWFK (1200 aa). FtsK domains follow at residues 652 to 846 and 997 to 1183; these read DDIL…QDSN and QGPM…SEVS. Residues 672–679 and 1014–1021 each bind ATP; these read GTTGSGKS and GSPGYGRT. The tract at residues 1249–1479 is required for substrate secretion, truncated protein is stable; the sequence is MMPDEIKYED…QAYQKIRWFK (231 aa).

It belongs to the EssC family. As to quaternary structure, homooligomer. Interacts with EsaE.

The protein resides in the cell membrane. In terms of biological role, component of the type VII secretion system (Ess). Required for the secretion of substrates including EsxA and EsxB. However, unable to support secretion of the substrate protein EsxC. This is Type VII secretion system protein EssC from Staphylococcus aureus (strain NCTC 8325 / PS 47).